We begin with the raw amino-acid sequence, 1331 residues long: uncharacterized protein (1331 aa).

The next 8 helical transmembrane spans lie at Val373 to Val393, Ala487 to Ile507, Leu534 to Ile554, Val579 to Leu599, Leu653 to Thr673, Val1206 to Ile1226, Ile1255 to Leu1275, and Ala1297 to Leu1317.

It belongs to the ABC-4 integral membrane protein family.

It localises to the cell membrane. This is an uncharacterized protein from Mycoplasma genitalium (strain ATCC 33530 / DSM 19775 / NCTC 10195 / G37) (Mycoplasmoides genitalium).